The primary structure comprises 115 residues: Large ribosomal subunit protein P2x (115 aa).

A disordered region spans residues 78-115; sequence GGGGGAASAAEPVAESKKKVEEVKDESSDDAGMMGLFD. Residues 91-103 show a composition bias toward basic and acidic residues; that stretch reads AESKKKVEEVKDE. Residues Ser104 and Ser105 each carry the phosphoserine modification.

The protein belongs to the eukaryotic ribosomal protein P1/P2 family. P1 and P2 exist as dimers at the large ribosomal subunit.

In terms of biological role, plays an important role in the elongation step of protein synthesis. The protein is Large ribosomal subunit protein P2x (RPP2C) of Arabidopsis thaliana (Mouse-ear cress).